Reading from the N-terminus, the 160-residue chain is 2-C-methyl-D-erythritol 2,4-cyclodiphosphate synthase (160 aa).

Residues aspartate 9 and histidine 11 each contribute to the a divalent metal cation site. Residues 9–11 (DVH) and 35–36 (HS) contribute to the 4-CDP-2-C-methyl-D-erythritol 2-phosphate site. Histidine 43 contacts a divalent metal cation. Residues 57–59 (DIG), 62–66 (FPDTD), 133–136 (TTTE), phenylalanine 140, and arginine 143 contribute to the 4-CDP-2-C-methyl-D-erythritol 2-phosphate site.

Belongs to the IspF family. As to quaternary structure, homotrimer. It depends on a divalent metal cation as a cofactor.

It carries out the reaction 4-CDP-2-C-methyl-D-erythritol 2-phosphate = 2-C-methyl-D-erythritol 2,4-cyclic diphosphate + CMP. Its pathway is isoprenoid biosynthesis; isopentenyl diphosphate biosynthesis via DXP pathway; isopentenyl diphosphate from 1-deoxy-D-xylulose 5-phosphate: step 4/6. Functionally, involved in the biosynthesis of isopentenyl diphosphate (IPP) and dimethylallyl diphosphate (DMAPP), two major building blocks of isoprenoid compounds. Catalyzes the conversion of 4-diphosphocytidyl-2-C-methyl-D-erythritol 2-phosphate (CDP-ME2P) to 2-C-methyl-D-erythritol 2,4-cyclodiphosphate (ME-CPP) with a corresponding release of cytidine 5-monophosphate (CMP). This chain is 2-C-methyl-D-erythritol 2,4-cyclodiphosphate synthase, found in Haemophilus ducreyi (strain 35000HP / ATCC 700724).